The chain runs to 240 residues: Enoyl-CoA delta isomerase 2, peroxisomal (240 aa).

The Microbody targeting signal signature appears at 238–240 (PKL).

The protein belongs to the enoyl-CoA hydratase/isomerase family.

It localises to the peroxisome. It catalyses the reaction a (3Z)-enoyl-CoA = a 4-saturated (2E)-enoyl-CoA. The enzyme catalyses a (3E)-enoyl-CoA = a 4-saturated (2E)-enoyl-CoA. Its pathway is lipid metabolism; fatty acid beta-oxidation. Able to isomerize both 3-cis and 3-trans double bonds into the 2-trans form in a range of enoyl-CoA species. Essential for the beta oxidation of unsaturated fatty acids. Involved with IBR1 and IBR3 in the peroxisomal beta-oxidation of indole-3-butyric acid (IBA) to form indole-3-acetic acid (IAA), a biologically active auxin. This is Enoyl-CoA delta isomerase 2, peroxisomal from Arabidopsis thaliana (Mouse-ear cress).